A 387-amino-acid chain; its full sequence is WD repeat-containing protein 89 (387 aa).

WD repeat units follow at residues 21 to 65, 68 to 107, 112 to 156, 168 to 208, 214 to 254, and 319 to 358; these read KEPT…VLRE, GYPGLLNGVRFANSCDSVYSACTDGTVKCWDARVAREKPV, GYPS…QNLS, THSD…EEDA, NSIS…TDEP, and GHAATVRSFCWNVQDDSLLTGGEDAQLLLWKPGAIEKTFT.

The chain is WD repeat-containing protein 89 (WDR89) from Homo sapiens (Human).